Reading from the N-terminus, the 334-residue chain is Anthranilate phosphoribosyltransferase (334 aa).

5-phospho-alpha-D-ribose 1-diphosphate-binding positions include Gly81, 84–85 (GD), Thr89, 91–94 (NIST), 109–117 (KHGSRSVSS), and Ala121. An anthranilate-binding site is contributed by Gly81. Ser93 is a binding site for Mg(2+). Position 167 (Arg167) interacts with anthranilate. Mg(2+) contacts are provided by Asp225 and Glu226.

This sequence belongs to the anthranilate phosphoribosyltransferase family. As to quaternary structure, homodimer. It depends on Mg(2+) as a cofactor.

The enzyme catalyses N-(5-phospho-beta-D-ribosyl)anthranilate + diphosphate = 5-phospho-alpha-D-ribose 1-diphosphate + anthranilate. It functions in the pathway amino-acid biosynthesis; L-tryptophan biosynthesis; L-tryptophan from chorismate: step 2/5. Functionally, catalyzes the transfer of the phosphoribosyl group of 5-phosphorylribose-1-pyrophosphate (PRPP) to anthranilate to yield N-(5'-phosphoribosyl)-anthranilate (PRA). The polypeptide is Anthranilate phosphoribosyltransferase (Actinobacillus pleuropneumoniae serotype 7 (strain AP76)).